The chain runs to 315 residues: uncharacterized protein (315 aa).

2 coiled-coil regions span residues 184 to 212 (AGEEDKKVMEELKEREKQLREDVSKTPEQ) and 238 to 275 (EEHRKKLHDVKKVILQAELEADSLEKTNPEVINQYKEK).

It belongs to the IIV-6 287R family.

This is an uncharacterized protein from Acheta domesticus (House cricket).